A 234-amino-acid polypeptide reads, in one-letter code: Phosphoribosylformylglycinamidine synthase subunit PurQ (234 aa).

The region spanning 4–234 (RIGVVTFPGS…TSILKKLVNA (231 aa)) is the Glutamine amidotransferase type-1 domain. The active-site Nucleophile is the cysteine 87. Active-site residues include histidine 204 and glutamate 206.

As to quaternary structure, part of the FGAM synthase complex composed of 1 PurL, 1 PurQ and 2 PurS subunits.

Its subcellular location is the cytoplasm. The catalysed reaction is N(2)-formyl-N(1)-(5-phospho-beta-D-ribosyl)glycinamide + L-glutamine + ATP + H2O = 2-formamido-N(1)-(5-O-phospho-beta-D-ribosyl)acetamidine + L-glutamate + ADP + phosphate + H(+). It carries out the reaction L-glutamine + H2O = L-glutamate + NH4(+). Its pathway is purine metabolism; IMP biosynthesis via de novo pathway; 5-amino-1-(5-phospho-D-ribosyl)imidazole from N(2)-formyl-N(1)-(5-phospho-D-ribosyl)glycinamide: step 1/2. Part of the phosphoribosylformylglycinamidine synthase complex involved in the purines biosynthetic pathway. Catalyzes the ATP-dependent conversion of formylglycinamide ribonucleotide (FGAR) and glutamine to yield formylglycinamidine ribonucleotide (FGAM) and glutamate. The FGAM synthase complex is composed of three subunits. PurQ produces an ammonia molecule by converting glutamine to glutamate. PurL transfers the ammonia molecule to FGAR to form FGAM in an ATP-dependent manner. PurS interacts with PurQ and PurL and is thought to assist in the transfer of the ammonia molecule from PurQ to PurL. The sequence is that of Phosphoribosylformylglycinamidine synthase subunit PurQ from Streptomyces avermitilis (strain ATCC 31267 / DSM 46492 / JCM 5070 / NBRC 14893 / NCIMB 12804 / NRRL 8165 / MA-4680).